The chain runs to 3371 residues: Protocadherin-23 (3371 aa).

The tract at residues 1-40 is disordered; it reads MSPCGRKMGEGRQQRRAPVGKLLLLPGRRDTPHGRSGSSG. Residues 1 to 46 lie on the Cytoplasmic side of the membrane; it reads MSPCGRKMGEGRQQRRAPVGKLLLLPGRRDTPHGRSGSSGARTQRS. The helical transmembrane segment at 47-67 threads the bilayer; sequence LLWLLVHVWLWAASGSSAQLF. Cadherin domains are found at residues 65 to 167, 168 to 296, 297 to 413, 424 to 539, 540 to 663, 664 to 771, 772 to 881, 877 to 979, 980 to 1082, 1085 to 1191, 1192 to 1294, 1299 to 1415, 1404 to 1510, 1511 to 1620, 1620 to 1724, 1725 to 1829, 1830 to 1933, 1934 to 2038, 2039 to 2130, 2140 to 2242, 2243 to 2347, 2347 to 2447, 2448 to 2549, 2550 to 2665, 2666 to 2769, 2770 to 2880, and 2881 to 2988; these read QLFN…SPRF, PLDS…PPVF, EQDE…RPAI, ARVS…PPLF, SQQH…EPIF, WRQV…HPVF, NPST…RPKY, ERPK…HPAF, LRTS…SPSW, EHLV…SPTF, LHDV…RPFF, PGKE…IPEN, SQNI…SPSF, QDEL…NPTF, FISF…APVF, KQHL…APEF, IVSS…SPSF, PTLY…DPVL, EQNP…VIHM, SHHL…SPCF, EQSI…APAF, FLPS…PPVF, SQDF…APEF, TVKS…PPNF, SSLS…APQF, MFSS…EPIF, and TQDQ…TPLA. The Extracellular portion of the chain corresponds to 68-2986; it reads NLTLSVDEGL…NVSFSSEGTP (2919 aa). 8 N-linked (GlcNAc...) asparagine glycosylation sites follow: N669, N772, N814, N905, N966, N1038, N1172, and N1275. N-linked (GlcNAc...) asparagine glycans are attached at residues N1487, N1595, N1617, and N1664. A glycan (N-linked (GlcNAc...) asparagine) is linked at N1898. N-linked (GlcNAc...) asparagine glycans are attached at residues N2054, N2070, and N2098. N2329 carries an N-linked (GlcNAc...) asparagine glycan. Residues N2479, N2497, N2555, and N2664 are each glycosylated (N-linked (GlcNAc...) asparagine). N-linked (GlcNAc...) asparagine glycosylation is found at N2929 and N2977. The chain crosses the membrane as a helical span at residues 2987-3017; the sequence is LAVFASSFSISLVVSFLVFLILICILIVMIL. At 3018–3371 the chain is on the cytoplasmic side; the sequence is RHKQKDTINN…ELKAEDEVQI (354 aa). Positions 3117-3140 are enriched in basic and acidic residues; the sequence is KCSDSALSDHESRVPDSGIPRDSD. The interval 3117–3141 is disordered; it reads KCSDSALSDHESRVPDSGIPRDSDQ.

As to expression, cerebral cortex and testis.

It is found in the membrane. Its function is as follows. Calcium-dependent cell-adhesion protein. The chain is Protocadherin-23 (DCHS2) from Homo sapiens (Human).